The sequence spans 424 residues: CinA-like protein (424 aa).

It belongs to the CinA family.

The protein is CinA-like protein of Syntrophobacter fumaroxidans (strain DSM 10017 / MPOB).